A 263-amino-acid polypeptide reads, in one-letter code: uncharacterized protein (263 aa).

Residues 22 to 44 form a disordered region; the sequence is IDGSDDQSDRTRSSSGDSTSNSL. Residues 34-43 show a composition bias toward low complexity; the sequence is SSSGDSTSNS.

It is found in the mitochondrion. This is an uncharacterized protein from Schizosaccharomyces pombe (strain 972 / ATCC 24843) (Fission yeast).